A 266-amino-acid chain; its full sequence is Tryptophan synthase alpha chain (266 aa).

Residues Glu49 and Asp60 each act as proton acceptor in the active site.

The protein belongs to the TrpA family. As to quaternary structure, tetramer of two alpha and two beta chains.

The enzyme catalyses (1S,2R)-1-C-(indol-3-yl)glycerol 3-phosphate + L-serine = D-glyceraldehyde 3-phosphate + L-tryptophan + H2O. It functions in the pathway amino-acid biosynthesis; L-tryptophan biosynthesis; L-tryptophan from chorismate: step 5/5. The alpha subunit is responsible for the aldol cleavage of indoleglycerol phosphate to indole and glyceraldehyde 3-phosphate. The chain is Tryptophan synthase alpha chain from Opitutus terrae (strain DSM 11246 / JCM 15787 / PB90-1).